Reading from the N-terminus, the 456-residue chain is MIRNDTIIAQVTCPGKSAVGILRVSGIHANQVAFAVLGKIPKPRFATYSKFFDESKKVLDEGISLWFPAPFSLTGEDVLELQGHGNPFIMDLLIKRILCLKNIKIRIAQPGEFCQRAFLNGKIDLIQAEAIDDLINSETESVVRASLNSLHGNFSFYIQKIIKKLIEFRTNIEASIDFSEENIDFDFNIFIMSNFEKLNDKFLKIKNIVSEGSLIREAKRIVIVGPPNAGKSSLLNVLSCRDRAIVTDLPGTTRDVLYENINIHGISCEIIDTAGLRETEDKIEKIGIQRSWEMIKNSDHVLYVMDKTISLEDQKKTSIQFMKQISSYNIQEVTFVLNKNDLVEDFCGITKIENLLFISISALTGQGIDILKKHLSNRQKDKSQEGLFIARRRHIHQIDLSYCELLKAQKNWLKYKNIELLAESLNIINKLLGEITGEFTSSDLLKRIFSTFCIGK.

(6S)-5-formyl-5,6,7,8-tetrahydrofolate contacts are provided by Arg23, Glu80, and Lys122. Residues 218–380 enclose the TrmE-type G domain; it reads AKRIVIVGPP…LKKHLSNRQK (163 aa). Asn228 provides a ligand contact to K(+). Residues 228–233, 247–253, and 272–275 contribute to the GTP site; these read NAGKSS, TDLPGTT, and DTAG. Ser232 provides a ligand contact to Mg(2+). Residues Thr247, Leu249, and Thr252 each coordinate K(+). Residue Thr253 coordinates Mg(2+). Lys456 provides a ligand contact to (6S)-5-formyl-5,6,7,8-tetrahydrofolate.

The protein belongs to the TRAFAC class TrmE-Era-EngA-EngB-Septin-like GTPase superfamily. TrmE GTPase family. In terms of assembly, homodimer. Heterotetramer of two MnmE and two MnmG subunits. It depends on K(+) as a cofactor.

The protein resides in the cytoplasm. Exhibits a very high intrinsic GTPase hydrolysis rate. Involved in the addition of a carboxymethylaminomethyl (cmnm) group at the wobble position (U34) of certain tRNAs, forming tRNA-cmnm(5)s(2)U34. This chain is tRNA modification GTPase MnmE, found in Buchnera aphidicola subsp. Schizaphis graminum (strain Sg).